The chain runs to 165 residues: uncharacterized protein (165 aa).

The chain crosses the membrane as a helical span at residues 16 to 36; the sequence is ASISSILNFFFFYIMEYFVAV.

This sequence belongs to the asfivirus F165R family.

It localises to the host membrane. This is an uncharacterized protein from African swine fever virus (isolate Tick/Malawi/Lil 20-1/1983) (ASFV).